Reading from the N-terminus, the 934-residue chain is MSSEFLSELHWEDGFAIPVANQENKILEDQLAKLHKEKSNLQDQLRDYEDRINSMSSHLKNVNQEFLFTQSLYKARECEIESEEHFKAIAERELGRVKDEIQQLEKEMAIILERKNDKENAIFKATQKLDGLKCQMNWDQQALEAWLEESAHKDSDSLTLQKYSQQDNNKIRALTLKLEKLTMECNEKRKLLDNELTETLSAQLELDKAAQDFRKIHVERQELIQQWENTIEQMQRRDQEIDNCALALARIKQEAREKEGVVREKIKFLENEVGNNVEYERRISIAERKVSKCRMEYQRQEANRNQLKDELDTLKTTLNRTSSDLEALRKNISKVKKDILDETGRLQKLKHHNEIVKHKLKMITEKTISIEEKATNMEDMLKEEEKNLKEVEVQLNIVKGVLFKKVQELQSAITKEKALGSEIEGTRSSLKHLNQRLHKLDFETLKQQEIMYSQDFYIQQVERRMSRLKGEINSEEKQALEVKIVELRKTMEERKSTLSLLEEQIKKLHNDLYFIKKSNGKNKDEKESLMNKIGELHLFVDRSEKELNKAKAVKEDLMIEDNLLKLQVKRARELLYSKAEEVLSLEKRKQQLCTAMEERVEEIKVHKAMLTSQIRYVDQQRQTVSSEFHERLSKIDKLKNRYEILTVVMLPPEGEEEKTQSYYVIKAAQEKEELQREGDSLDAKISKAEKEIYALQNTLQVLSSCNNNYKQSFKKVTPSSDEYGIKIQLEEQKRSADEKYRCKQRQIRELQEDIQSMENTFEVIEHLANNAREKLSEKQTLSFQLRKETEEQKPKIQRVTKQCGRLRREIRILRQTNDETLEEQDIQLREIIQFHKDIDQMLVNAMENAEIHVIFQTYFQQNGLELPTAKGPSSRSSSQSSLSSIRSLEDSIPISPPTAKVIELRFPGPPARSDSSRSSSGSNSNIPKGKKLNK.

4 coiled-coil regions span residues 17–133, 164–512, 540–615, and 664–826; these read IPVA…DGLK, SQQD…HNDL, VDRS…SQIR, and VIKA…EQDI. The interval 866 to 934 is disordered; that stretch reads LPTAKGPSSR…NIPKGKKLNK (69 aa). The segment covering 873–892 has biased composition (low complexity); sequence SSRSSSQSSLSSIRSLEDSI. Phosphoserine occurs at positions 887 and 895. Residues 912 to 925 show a composition bias toward low complexity; that stretch reads RSDSSRSSSGSNSN.

Belongs to the CCDC39 family.

It localises to the cytoplasm. The protein localises to the cytoskeleton. Its subcellular location is the cilium axoneme. Its function is as follows. Required for assembly of dynein regulatory complex (DRC) and inner dynein arm (IDA) complexes, which are responsible for ciliary beat regulation, thereby playing a central role in motility in cilia and flagella. Probably acts together with CCDC40 to form a molecular ruler that determines the 96 nanometer (nm) repeat length and arrangements of components in cilia and flagella. Not required for outer dynein arm complexes assembly. The polypeptide is Coiled-coil domain-containing protein 39 (Ccdc39) (Rattus norvegicus (Rat)).